The following is a 161-amino-acid chain: Thy-1 membrane glycoprotein (161 aa).

The first 19 residues, 1 to 19, serve as a signal peptide directing secretion; that stretch reads MNLAISIALLLTVLQVSRG. Glutamine 20 carries the pyrrolidone carboxylic acid modification. Positions 20–126 constitute an Ig-like V-type domain; sequence QKVTSLTACL…SQNVTVLRDK (107 aa). Disulfide bonds link cysteine 28–cysteine 130 and cysteine 38–cysteine 104. Asparagine 42 and asparagine 79 each carry an N-linked (GlcNAc...) asparagine glycan. Serine 82 is modified (phosphoserine). N-linked (GlcNAc...) asparagine glycosylation occurs at asparagine 119. Cysteine 130 is lipidated: GPI-anchor amidated cysteine; alternate. A propeptide spans 131-161 (removed in mature form); that stretch reads EGISLLAQNTSWLLLLLLSLSLLQATDFMSL. An N-linked (GlcNAc...) asparagine glycan is attached at asparagine 139.

The protein localises to the cell membrane. May play a role in cell-cell or cell-ligand interactions during synaptogenesis and other events in the brain. The sequence is that of Thy-1 membrane glycoprotein (THY1) from Homo sapiens (Human).